The primary structure comprises 410 residues: Neuroserpin (410 aa).

An N-terminal signal peptide occupies residues 1-16; the sequence is MAYLGLLSLVALQSLV. Residue S83 is modified to Phosphoserine. N157, N321, and N401 each carry an N-linked (GlcNAc...) asparagine glycan. Residue S403 is glycosylated (O-linked (Xyl...) (chondroitin sulfate) serine).

It belongs to the serpin family. In terms of tissue distribution, detected in adult pituitary and adrenal gland.

Its subcellular location is the secreted. The protein localises to the cytoplasmic vesicle. The protein resides in the secretory vesicle lumen. It is found in the perikaryon. Its function is as follows. Serine protease inhibitor that inhibits plasminogen activators and plasmin but not thrombin. May be involved in the formation or reorganization of synaptic connections as well as for synaptic plasticity in the adult nervous system. May protect neurons from cell damage by tissue-type plasminogen activator. This Rattus norvegicus (Rat) protein is Neuroserpin (Serpini1).